The primary structure comprises 280 residues: 4-diphosphocytidyl-2-C-methyl-D-erythritol kinase (280 aa).

Lys-8 is an active-site residue. ATP is bound at residue 91-101 (PVAAGLAGGSA). Residue Asp-133 is part of the active site.

It belongs to the GHMP kinase family. IspE subfamily.

It carries out the reaction 4-CDP-2-C-methyl-D-erythritol + ATP = 4-CDP-2-C-methyl-D-erythritol 2-phosphate + ADP + H(+). It functions in the pathway isoprenoid biosynthesis; isopentenyl diphosphate biosynthesis via DXP pathway; isopentenyl diphosphate from 1-deoxy-D-xylulose 5-phosphate: step 3/6. In terms of biological role, catalyzes the phosphorylation of the position 2 hydroxy group of 4-diphosphocytidyl-2C-methyl-D-erythritol. In Clostridium acetobutylicum (strain ATCC 824 / DSM 792 / JCM 1419 / IAM 19013 / LMG 5710 / NBRC 13948 / NRRL B-527 / VKM B-1787 / 2291 / W), this protein is 4-diphosphocytidyl-2-C-methyl-D-erythritol kinase.